Reading from the N-terminus, the 181-residue chain is ADP-ribosylation factor 1 (181 aa).

Residue Gly-2 is the site of N-myristoyl glycine attachment. The segment at 3–16 (LYVSRLFNRLFQKK) is important for the stable binding to the membranes. GTP contacts are provided by residues 27–32 (AAGKTT), 126–129 (NKQD), and Ala-160.

Belongs to the small GTPase superfamily. Arf family. In terms of assembly, may interact with GTPase RAB5b.

The protein resides in the golgi apparatus membrane. It catalyses the reaction GTP + H2O = GDP + phosphate + H(+). With respect to regulation, alternates between an inactive GDP-bound form and an active GTP-bound form. Intrinsic GTPase activity is almost undetectable in vitro. Activated by a guanine nucleotide-exchange factor (GEF) and inactivated by GTPase-activating protein ARFGAP1. Its function is as follows. Small GTPase involved in protein trafficking between different compartments. Modulates vesicle budding and uncoating within the Golgi complex. In its GTP-bound form, triggers the recruitment of coatomer proteins to the Golgi membrane. The hydrolysis of ARF1-bound GTP, which is mediated by ARFGAPs proteins, is required for dissociation of coat proteins from Golgi membranes and vesicles. Regulates the transport of N-acylated AK2 to the parasitophorous vacuole membrane. May be involved in the activation of lipid kinase PIP5K. The protein is ADP-ribosylation factor 1 of Plasmodium falciparum (isolate 3D7).